The primary structure comprises 151 residues: FAD synthase (151 aa).

Residues Thr9–Phe10, His14–His17, Asp96, and Tyr123 each bind ATP.

This sequence belongs to the archaeal FAD synthase family. In terms of assembly, homodimer. A divalent metal cation is required as a cofactor.

The enzyme catalyses FMN + ATP + H(+) = FAD + diphosphate. The protein operates within cofactor biosynthesis; FAD biosynthesis; FAD from FMN: step 1/1. In terms of biological role, catalyzes the transfer of the AMP portion of ATP to flavin mononucleotide (FMN) to produce flavin adenine dinucleotide (FAD) coenzyme. The polypeptide is FAD synthase (Methanothermobacter thermautotrophicus (strain ATCC 29096 / DSM 1053 / JCM 10044 / NBRC 100330 / Delta H) (Methanobacterium thermoautotrophicum)).